The primary structure comprises 293 residues: UPF0282 protein MK0213 (293 aa).

The protein belongs to the UPF0282 family.

This Methanopyrus kandleri (strain AV19 / DSM 6324 / JCM 9639 / NBRC 100938) protein is UPF0282 protein MK0213.